A 919-amino-acid polypeptide reads, in one-letter code: Transcriptional regulatory protein EDS1 (919 aa).

Residues 1–54 are disordered; that stretch reads MSHHVPNLYGTPIRDPHERKRNSASMGEVNQSVSSRNCERGSEKGTKQRKKASR. The span at 23–36 shows a compositional bias: polar residues; it reads SASMGEVNQSVSSR. Residues 37–46 are compositionally biased toward basic and acidic residues; the sequence is NCERGSEKGT. Residues 56–85 constitute a DNA-binding region (zn(2)-C6 fungal-type); sequence CDQCRRKRIKCRFDKHTGVCQGCLEVGEKC. The segment at 297-338 is disordered; the sequence is AGCPNKKLGTDGRSDKWDKNSTWKPVYRSSNPSHPSTEKNVS. A compositionally biased stretch (basic and acidic residues) spans 304-317; that stretch reads LGTDGRSDKWDKNS. Positions 318–338 are enriched in polar residues; it reads TWKPVYRSSNPSHPSTEKNVS.

In terms of assembly, binds DNA in a sequence-specific manner.

Its subcellular location is the nucleus. In Saccharomyces cerevisiae (strain RM11-1a) (Baker's yeast), this protein is Transcriptional regulatory protein EDS1 (EDS1).